The following is a 216-amino-acid chain: FMN-dependent NADH:quinone oxidoreductase 2 (216 aa).

Residues serine 9, 15–17, 96–99, and 140–143 contribute to the FMN site; these read SVS, MYNF, and SRGG.

This sequence belongs to the azoreductase type 1 family. As to quaternary structure, homodimer. FMN serves as cofactor.

It carries out the reaction 2 a quinone + NADH + H(+) = 2 a 1,4-benzosemiquinone + NAD(+). It catalyses the reaction N,N-dimethyl-1,4-phenylenediamine + anthranilate + 2 NAD(+) = 2-(4-dimethylaminophenyl)diazenylbenzoate + 2 NADH + 2 H(+). Its function is as follows. Quinone reductase that provides resistance to thiol-specific stress caused by electrophilic quinones. In terms of biological role, also exhibits azoreductase activity. Catalyzes the reductive cleavage of the azo bond in aromatic azo compounds to the corresponding amines. The chain is FMN-dependent NADH:quinone oxidoreductase 2 from Xanthomonas euvesicatoria pv. vesicatoria (strain 85-10) (Xanthomonas campestris pv. vesicatoria).